The primary structure comprises 256 residues: Thiazole synthase (256 aa).

The active-site Schiff-base intermediate with DXP is K96. 1-deoxy-D-xylulose 5-phosphate is bound by residues G157, 184–185 (AG), and 206–207 (NT).

It belongs to the ThiG family. In terms of assembly, homotetramer. Forms heterodimers with either ThiH or ThiS.

Its subcellular location is the cytoplasm. The enzyme catalyses [ThiS sulfur-carrier protein]-C-terminal-Gly-aminoethanethioate + 2-iminoacetate + 1-deoxy-D-xylulose 5-phosphate = [ThiS sulfur-carrier protein]-C-terminal Gly-Gly + 2-[(2R,5Z)-2-carboxy-4-methylthiazol-5(2H)-ylidene]ethyl phosphate + 2 H2O + H(+). It functions in the pathway cofactor biosynthesis; thiamine diphosphate biosynthesis. Functionally, catalyzes the rearrangement of 1-deoxy-D-xylulose 5-phosphate (DXP) to produce the thiazole phosphate moiety of thiamine. Sulfur is provided by the thiocarboxylate moiety of the carrier protein ThiS. In vitro, sulfur can be provided by H(2)S. The protein is Thiazole synthase of Brucella abortus (strain S19).